The chain runs to 333 residues: Homeobox protein Nkx-3.2 (333 aa).

Disordered stretches follow at residues 74-121 (PART…RARV) and 137-212 (DLEE…SRAA). The segment covering 137–148 (DLEEEAPVRSDS) has biased composition (basic and acidic residues). The span at 179–191 (GAAGSGASGGQAG) shows a compositional bias: gly residues. A DNA-binding region (homeobox) is located at residues 206–265 (KKRSRAAFSHAQVFELERRFNHQRYLSGPERADLAASLKLTETQVKIWFQNRRYKTKRRQ).

The protein belongs to the NK-3 homeobox family. As to expression, expressed widely in mesoderm at the gastroduodenal junction (at protein level). Expressed in visceral mesoderm and embryonic skeleton. Expression is restricted to immature proliferative chondrocytes during endochondral ossification.

It is found in the nucleus. In terms of biological role, transcriptional repressor that acts as a negative regulator of chondrocyte maturation. PLays a role in distal stomach development; required for proper antral-pyloric morphogenesis and development of antral-type epithelium. In concert with GSC, defines the structural components of the middle ear; required for tympanic ring and gonium development and in the regulation of the width of the malleus. This chain is Homeobox protein Nkx-3.2 (Nkx3-2), found in Mus musculus (Mouse).